We begin with the raw amino-acid sequence, 125 residues long: uncharacterized protein (125 aa).

This is an uncharacterized protein from Bacillus subtilis (strain 168).